The sequence spans 195 residues: Pyruvoyl-dependent arginine decarboxylase AaxB (195 aa).

The residue at position 53 (serine 53) is a Pyruvic acid (Ser).

It belongs to the pyruvoyl-dependent arginine decarboxylase family. As to quaternary structure, trimer of an alpha-beta dimer. The cofactor is pyruvate.

The protein localises to the cytoplasm. The enzyme catalyses L-arginine + H(+) = agmatine + CO2. Inhibited by argininamide. Its function is as follows. Part of the AaxABC system, catalyzes the decarboxylation of L-arginine. The arginine uptake by the bacterium in the macrophage may be a virulence factor against the host innate immune response. The chain is Pyruvoyl-dependent arginine decarboxylase AaxB (aaxB) from Chlamydia pneumoniae (Chlamydophila pneumoniae).